Consider the following 347-residue polypeptide: Gamma-glutamyl hydrolase B (347 aa).

The N-terminal stretch at 1–22 (MIKLFSLFIYLYLISNLKLINT) is a signal peptide. A Gamma-glutamyl hydrolase domain is found at 23–314 (INNTPVIGIL…THVEQIYIFN (292 aa)). Cys-128 serves as the catalytic Nucleophile. N-linked (GlcNAc...) asparagine glycans are attached at residues Asn-152, Asn-158, and Asn-201. Residue His-240 is the Proton donor of the active site. Residues Asn-273, Asn-314, and Asn-318 are each glycosylated (N-linked (GlcNAc...) asparagine).

The protein belongs to the peptidase C26 family.

The protein localises to the secreted. Its subcellular location is the extracellular space. It carries out the reaction (6S)-5,6,7,8-tetrahydrofolyl-(gamma-L-Glu)(n) + (n-1) H2O = (6S)-5,6,7,8-tetrahydrofolate + (n-1) L-glutamate. The sequence is that of Gamma-glutamyl hydrolase B (gghB) from Dictyostelium discoideum (Social amoeba).